The following is a 242-amino-acid chain: MRHVAVIIPARYGASRFPGKPLADLAGKPLIAHVVERAKRARGVDVVAVATDDDRIARAVRDAGGEAILTGPAATGTDRVAEAARKLAPRPEIVVNLQGDEPLIEPEAIEAVIGAMEGGVRMATLARPLAAGELERTQVVKVVTRASGDALYFSRAPIPHRRAGGESPLARAHVGIYAFTAAFLETFTALAPGRLEGEEALEQLRALEHGYDIRVADTGYRGFGIDTPDDLERARALLAAGA.

The protein belongs to the KdsB family.

It localises to the cytoplasm. The catalysed reaction is 3-deoxy-alpha-D-manno-oct-2-ulosonate + CTP = CMP-3-deoxy-beta-D-manno-octulosonate + diphosphate. Its pathway is nucleotide-sugar biosynthesis; CMP-3-deoxy-D-manno-octulosonate biosynthesis; CMP-3-deoxy-D-manno-octulosonate from 3-deoxy-D-manno-octulosonate and CTP: step 1/1. The protein operates within bacterial outer membrane biogenesis; lipopolysaccharide biosynthesis. Its function is as follows. Activates KDO (a required 8-carbon sugar) for incorporation into bacterial lipopolysaccharide in Gram-negative bacteria. The sequence is that of 3-deoxy-manno-octulosonate cytidylyltransferase from Anaeromyxobacter sp. (strain K).